The sequence spans 165 residues: NADPH-dependent 7-cyano-7-deazaguanine reductase (165 aa).

Cys56 functions as the Thioimide intermediate in the catalytic mechanism. Catalysis depends on Asp63, which acts as the Proton donor. Substrate-binding positions include 78 to 80 and 97 to 98; these read VES and HE.

Belongs to the GTP cyclohydrolase I family. QueF type 1 subfamily.

It is found in the cytoplasm. The enzyme catalyses 7-aminomethyl-7-carbaguanine + 2 NADP(+) = 7-cyano-7-deazaguanine + 2 NADPH + 3 H(+). The protein operates within tRNA modification; tRNA-queuosine biosynthesis. Its function is as follows. Catalyzes the NADPH-dependent reduction of 7-cyano-7-deazaguanine (preQ0) to 7-aminomethyl-7-deazaguanine (preQ1). The polypeptide is NADPH-dependent 7-cyano-7-deazaguanine reductase (Bacillus anthracis (strain A0248)).